A 512-amino-acid polypeptide reads, in one-letter code: Cytochrome P450 monooxygenase 208 (512 aa).

Residues Leu-4–Tyr-24 form a helical membrane-spanning segment. Cys-438 lines the heme pocket.

It belongs to the cytochrome P450 family. Heme serves as cofactor.

It localises to the membrane. It participates in secondary metabolite biosynthesis. Cytochrome P450 monooxygenase that is able to use 7-ethoxycoumarin as a substrate for oxidation. The polypeptide is Cytochrome P450 monooxygenase 208 (Postia placenta (strain ATCC 44394 / Madison 698-R) (Brown rot fungus)).